We begin with the raw amino-acid sequence, 192 residues long: Virion infectivity factor (192 aa).

Residues 14-17 are interaction with host APOBEC3F; F1-box; it reads DRMR. Positions 40 to 44 are interaction with host APOBEC3G; G-box; it reads YRHHY. The segment at 54–72 is interaction with host APOBEC3F and APOBEC3G; FG-box; that stretch reads EVHIPLGEARLVVTTYWGL. The interval 74-79 is interaction with host APOBEC3F; F2-box; sequence TGEKEW. Residues 75-114 are RNA-binding; that stretch reads GEKEWHLGQGVSIEWRKRRYSTQVDPGLADQLIHMYYFDC. The residue at position 96 (Thr-96) is a Phosphothreonine; by host MAP4K1. Residues His-108, Cys-114, Cys-133, and His-139 each coordinate Zn(2+). The short motif at 108 to 139 is the HCCH motif element; it reads HMYYFDCFAESAIRKAILGHIVSPSCEYQAGH. Ser-144 bears the Phosphoserine; by host mark. Positions 144–153 match the BC-box-like motif motif; that stretch reads SLQYLALAAL. The multimerization stretch occupies residues 151–164; sequence AALIAPKKIKPPLP. An SOCS box-like region spans residues 151–180; sequence AALIAPKKIKPPLPSVRKLTEDRWNKPQKT. Ser-165 is modified (phosphoserine; by host MAP4K1). Positions 165–192 are disordered; sequence SVRKLTEDRWNKPQKTKGRRGSHTMNGH. The membrane association stretch occupies residues 171 to 172; the sequence is ED. Residues 176–186 show a composition bias toward basic residues; it reads KPQKTKGRRGS. At Thr-188 the chain carries Phosphothreonine; by host.

The protein belongs to the primate lentivirus group Vif protein family. Homomultimer; in vitro and presumably in vivo. Interacts with viral RNA and Pr55Gag precursor; these interactions mediate Vif incorporation into the virion. Interacts with the viral reverse transcriptase. Forms cullin-5-RING E3 ubiquitin-protein ligase complex (ECS complex) by interacting with host CUL5, RBX2, elongin BC complex (ELOB and ELOC) and CBFB/CBF-beta. Within the ECS complex, Vif interacts directly with host CUL5, ELOC and APOBEC (APOBEC3F and APOBEC3G) substrates. The ECS complex also contains some single-stranded RNA (ssRNA) that acts as a glue that bridges Vif with APOBEC (APOBEC3F and APOBEC3G) substrates. Interacts with host UBCE7IP1 isoform 3/ZIN and possibly with SAT. Interacts with host tyrosine kinases HCK and FYN; these interactions may decrease level of phosphorylated APOBEC3G incorporation into virions. Interacts with host ABCE1; this interaction may play a role in protecting viral RNA from damage during viral assembly. Interacts with host MDM2; this interaction targets Vif for degradation by the proteasome. In terms of processing, processed in virion by the viral protease. Post-translationally, highly phosphorylated on serine and threonine residues. Polyubiquitinated and degraded by the proteasome in the presence of APOBEC3G.

The protein localises to the host cytoplasm. It localises to the host cell membrane. It is found in the virion. Its function is as follows. Counteracts the innate antiviral activity of host APOBEC3F and APOBEC3G by promoting their ubiquitination and degradation. Acts as a substrate recognition component of an E3 ubiquitin-protein ligase complex: mechanistically, Vif hijacks a host cullin-5-RING E3 ubiquitin-protein ligase complex (ECS complex) and the transcription coactivator CBFB/CBF-beta to form an active E3 ubiquitin-protein ligase complex that targets APOBEC3G and APOBEC3F for polyubiquitination, leading to their degradation by the proteasome. Vif interaction with APOBEC3G also blocks its cytidine deaminase activity in a proteasome-independent manner, suggesting a dual inhibitory mechanism. May interact directly with APOBEC3G mRNA in order to inhibit its translation. Association with CBFB/CBF-beta also inhibits the transcription coactivator activity of CBFB/CBF-beta. Seems to play a role in viral morphology by affecting the stability of the viral nucleoprotein core. Finally, Vif also contributes to the G2 cell cycle arrest observed in HIV infected cells. The polypeptide is Virion infectivity factor (Human immunodeficiency virus type 1 group M subtype D (isolate NDK) (HIV-1)).